A 181-amino-acid polypeptide reads, in one-letter code: Inner kinetochore subunit MCM16 (181 aa).

Positions 112 to 171 (KQLIESRAERDELMSKLIELSSKFPKPTIPPDDSDTAGKQVEVEKENETIQELMIALQIH) form a coiled coil.

The protein belongs to the CENP-H/MCM16 family. As to quaternary structure, component of the heterotrimeric kinetochore subcomplex CTF3, which consists of CTF3, MCM16 and MCM22. The CTF3 subcomplex is part of a larger constitutive centromere-associated network (CCAN) (also known as central kinetochore CTF19 complex in yeast), which is composed of at least AME1, CHL4, CNN1, CTF3, CTF19, IML3, MCM16, MCM21, MCM22, MHF1, MHF2, MIF2, NKP1, NKP2, OKP1 and WIP1. Interacts with CTF19.

It is found in the nucleus. The protein resides in the chromosome. Its subcellular location is the centromere. It localises to the kinetochore. Its function is as follows. Component of the kinetochore, a multiprotein complex that assembles on centromeric DNA and attaches chromosomes to spindle microtubules, mediating chromosome segregation and sister chromatid segregation during meiosis and mitosis. Component of the inner kinetochore constitutive centromere-associated network (CCAN), which serves as a structural platform for outer kinetochore assembly. In Saccharomyces cerevisiae (strain ATCC 204508 / S288c) (Baker's yeast), this protein is Inner kinetochore subunit MCM16 (MCM16).